The primary structure comprises 207 residues: Serotonin N-acetyltransferase (207 aa).

Positions 1 to 29 (MSTPSVHCLKPSPLHLPSGIPGSPGRQRR) are disordered. Residues 28-35 (RRHTLPAN) are YWHAZ-binding. The residue at position 31 (Thr-31) is a Phosphothreonine; by PKA. The N-acetyltransferase domain occupies 35–196 (NEFRCLTPED…TFTEMHCSLR (162 aa)). Leu-124 is a substrate binding site. Acetyl-CoA is bound by residues 124–126 (LAV) and 132–137 (QQGKGS). Met-159 contributes to the substrate binding site. An acetyl-CoA-binding site is contributed by 168-170 (YQR). A Phosphoserine; by PKA modification is found at Ser-205.

This sequence belongs to the acetyltransferase family. AANAT subfamily. Monomer. Interacts with several 14-3-3 proteins, including YWHAB, YWHAE, YWHAG and YWHAZ, preferentially when phosphorylated at Thr-31. Phosphorylation on Ser-205 also allows binding to YWHAZ, but with a 10-fold lower affinity. The interaction with YWHAZ considerably increases affinity for arylalkylamines and acetyl-CoA and protects the enzyme from dephosphorylation and proteasomal degradation. It may also prevent thiol-dependent inactivation. The physiological stoichiometry of the interaction is not clear. In vitro studies show either 1:2 (i.e. 1 AANAT molecule per YWHAZ dimer) or 2:2. Post-translationally, cAMP-dependent phosphorylation on both N-terminal Thr-31 and C-terminal Ser-205 regulates AANAT activity by promoting interaction with 14-3-3 proteins. In terms of tissue distribution, highest expression in the pineal gland, followed by retina. Expressed at much lower levels in brainstem and pituitary gland. AANAT activity also detected at low levels in the olfactory lobe.

It localises to the cytoplasm. The catalysed reaction is a 2-arylethylamine + acetyl-CoA = an N-acetyl-2-arylethylamine + CoA + H(+). Its pathway is aromatic compound metabolism; melatonin biosynthesis; melatonin from serotonin: step 1/2. Controls the night/day rhythm of melatonin production in the pineal gland. Catalyzes the N-acetylation of serotonin into N-acetylserotonin, the penultimate step in the synthesis of melatonin. The sequence is that of Serotonin N-acetyltransferase (AANAT) from Ovis aries (Sheep).